A 208-amino-acid chain; its full sequence is NADH-ubiquinone oxidoreductase chain 4 (208 aa).

The next 6 membrane-spanning stretches (helical) occupy residues 23–43, 60–80, 93–113, 114–134, 147–167, and 185–205; these read VWINVTTYSLLINLISINLLW, PLSAPLLVLTTWLLPLMLLAS, KLYISLLVCLQTLLIMTFSAN, ELIMFYILFEATLIPTLIIIT, IYFLFYTLVGSIPLLIALIYI, and PINQTWSNNILWLACIMAFMV.

The protein belongs to the complex I subunit 4 family. As to quaternary structure, core subunit of respiratory chain NADH dehydrogenase (Complex I) which is composed of 45 different subunits.

It localises to the mitochondrion inner membrane. The enzyme catalyses a ubiquinone + NADH + 5 H(+)(in) = a ubiquinol + NAD(+) + 4 H(+)(out). Functionally, core subunit of the mitochondrial membrane respiratory chain NADH dehydrogenase (Complex I) which catalyzes electron transfer from NADH through the respiratory chain, using ubiquinone as an electron acceptor. Essential for the catalytic activity and assembly of complex I. This Microtus pennsylvanicus (Meadow vole) protein is NADH-ubiquinone oxidoreductase chain 4 (MT-ND4).